The primary structure comprises 436 residues: Deoxyuridine 5'-triphosphate nucleotidohydrolase (436 aa).

Residues 328–330 (RSS) and 431–432 (FG) contribute to the substrate site.

Belongs to the dUTPase family. The cofactor is Mg(2+).

It catalyses the reaction dUTP + H2O = dUMP + diphosphate + H(+). In terms of biological role, involved in nucleotide metabolism: produces dUMP, the immediate precursor of thymidine nucleotides and decreases the intracellular concentration of dUTP to avoid uracil incorporation into viral DNA. This Gallid herpesvirus 2 (strain Chicken/Md5/ATCC VR-987) (GaHV-2) protein is Deoxyuridine 5'-triphosphate nucleotidohydrolase.